We begin with the raw amino-acid sequence, 64 residues long: DNA gyrase inhibitor YacG (64 aa).

Zn(2+)-binding residues include cysteine 10, cysteine 13, cysteine 29, and cysteine 33.

Belongs to the DNA gyrase inhibitor YacG family. As to quaternary structure, interacts with GyrB. It depends on Zn(2+) as a cofactor.

Inhibits all the catalytic activities of DNA gyrase by preventing its interaction with DNA. Acts by binding directly to the C-terminal domain of GyrB, which probably disrupts DNA binding by the gyrase. This Pectobacterium atrosepticum (strain SCRI 1043 / ATCC BAA-672) (Erwinia carotovora subsp. atroseptica) protein is DNA gyrase inhibitor YacG.